The sequence spans 284 residues: tRNA pseudouridine synthase A (284 aa).

Asp62 acts as the Nucleophile in catalysis. Tyr123 is a binding site for substrate.

It belongs to the tRNA pseudouridine synthase TruA family. Homodimer.

The catalysed reaction is uridine(38/39/40) in tRNA = pseudouridine(38/39/40) in tRNA. Its function is as follows. Formation of pseudouridine at positions 38, 39 and 40 in the anticodon stem and loop of transfer RNAs. The sequence is that of tRNA pseudouridine synthase A from Streptomyces griseus subsp. griseus (strain JCM 4626 / CBS 651.72 / NBRC 13350 / KCC S-0626 / ISP 5235).